The following is a 1050-amino-acid chain: Atrial natriuretic peptide receptor 2 (1050 aa).

An N-terminal signal peptide occupies residues 1–19 (MDLGHSLFVVFTCFLMARC). Residues 20–460 (RTEIGKNITV…FCNEDQLPVL (441 aa)) lie on the Extracellular side of the membrane. Residues N26 and N74 are each glycosylated (N-linked (GlcNAc...) asparagine). C84 and C110 are disulfide-bonded. N169, N203, N285, N352, N366, and N415 each carry an N-linked (GlcNAc...) asparagine glycan. Residues C236 and C339 are joined by a disulfide bond. The helical transmembrane segment at 461-481 (GIVAVGSGLALIIFGISSFLI) threads the bilayer. Residues 482 to 1050 (YRKLKLEKEL…LGEKTDVYVI (569 aa)) lie on the Cytoplasmic side of the membrane. A Protein kinase domain is found at 517–790 (SRLTISQRGS…PDFSYIKIFV (274 aa)). A Guanylate cyclase domain is found at 865-995 (TIYFSDIVGF…DTVNTASRME (131 aa)).

The protein belongs to the adenylyl cyclase class-4/guanylyl cyclase family. Phosphorylated. Phosphorylation of the protein kinase-like domain is required for full activation by CNP. Post-translationally, glycosylated. As to expression, high levels found in liver, atrium and gill. Moderate levels found in brain and ventricle, and low levels in esophageal sphincter, stomach, posterior intestine and kidney.

It is found in the cell membrane. The catalysed reaction is GTP = 3',5'-cyclic GMP + diphosphate. Receptor for the C-type natriuretic peptide NPPC/CNP hormone. Has guanylate cyclase activity upon binding of its ligand. May play a role in the regulation of skeletal growth. The protein is Atrial natriuretic peptide receptor 2 (npr2) of Anguilla japonica (Japanese eel).